We begin with the raw amino-acid sequence, 62 residues long: UPF0291 protein CLI_2672 (62 aa).

The protein belongs to the UPF0291 family.

It is found in the cytoplasm. In Clostridium botulinum (strain Langeland / NCTC 10281 / Type F), this protein is UPF0291 protein CLI_2672.